The following is a 182-amino-acid chain: Ribosome maturation factor RimM (182 aa).

Residues 103-182 (EGDYYWKDLM…TIEVDWDPGF (80 aa)) enclose the PRC barrel domain.

Belongs to the RimM family. In terms of assembly, binds ribosomal protein uS19.

It localises to the cytoplasm. Functionally, an accessory protein needed during the final step in the assembly of 30S ribosomal subunit, possibly for assembly of the head region. Essential for efficient processing of 16S rRNA. May be needed both before and after RbfA during the maturation of 16S rRNA. It has affinity for free ribosomal 30S subunits but not for 70S ribosomes. The protein is Ribosome maturation factor RimM of Klebsiella pneumoniae subsp. pneumoniae (strain ATCC 700721 / MGH 78578).